A 186-amino-acid chain; its full sequence is ATP synthase subunit b' (186 aa).

A helical transmembrane segment spans residues 39–59 (IFWLLLALGAIYWLLKNIAIP).

The protein belongs to the ATPase B chain family. In terms of assembly, F-type ATPases have 2 components, F(1) - the catalytic core - and F(0) - the membrane proton channel. F(1) has five subunits: alpha(3), beta(3), gamma(1), delta(1), epsilon(1). F(0) has four main subunits: a(1), b(1), b'(1) and c(10-14). The alpha and beta chains form an alternating ring which encloses part of the gamma chain. F(1) is attached to F(0) by a central stalk formed by the gamma and epsilon chains, while a peripheral stalk is formed by the delta, b and b' chains.

The protein resides in the cellular chromatophore membrane. F(1)F(0) ATP synthase produces ATP from ADP in the presence of a proton or sodium gradient. F-type ATPases consist of two structural domains, F(1) containing the extramembraneous catalytic core and F(0) containing the membrane proton channel, linked together by a central stalk and a peripheral stalk. During catalysis, ATP synthesis in the catalytic domain of F(1) is coupled via a rotary mechanism of the central stalk subunits to proton translocation. Its function is as follows. Component of the F(0) channel, it forms part of the peripheral stalk, linking F(1) to F(0). The b'-subunit is a diverged and duplicated form of b found in plants and photosynthetic bacteria. The chain is ATP synthase subunit b' from Rhodobacter capsulatus (Rhodopseudomonas capsulata).